A 196-amino-acid polypeptide reads, in one-letter code: Probable malonic semialdehyde reductase RutE (196 aa).

This sequence belongs to the nitroreductase family. HadB/RutE subfamily. FMN is required as a cofactor.

The enzyme catalyses 3-hydroxypropanoate + NADP(+) = 3-oxopropanoate + NADPH + H(+). Its function is as follows. May reduce toxic product malonic semialdehyde to 3-hydroxypropionic acid, which is excreted. The polypeptide is Probable malonic semialdehyde reductase RutE (Escherichia coli O139:H28 (strain E24377A / ETEC)).